A 511-amino-acid polypeptide reads, in one-letter code: Maturase K (511 aa).

This sequence belongs to the intron maturase 2 family. MatK subfamily.

The protein resides in the plastid. Its subcellular location is the chloroplast. In terms of biological role, usually encoded in the trnK tRNA gene intron. Probably assists in splicing its own and other chloroplast group II introns. This chain is Maturase K, found in Diplacus aurantiacus (Orange bush monkey flower).